Reading from the N-terminus, the 342-residue chain is Anthranilate phosphoribosyltransferase (342 aa).

Residues Gly79, 82 to 83, Thr87, 89 to 92, 107 to 115, and Ser119 contribute to the 5-phospho-alpha-D-ribose 1-diphosphate site; these read GD, NVST, and KHGNRAATS. Gly79 serves as a coordination point for anthranilate. A Mg(2+)-binding site is contributed by Ser91. Asn110 contributes to the anthranilate binding site. Arg165 lines the anthranilate pocket. Mg(2+) contacts are provided by Asp224 and Glu225.

It belongs to the anthranilate phosphoribosyltransferase family. In terms of assembly, homodimer. It depends on Mg(2+) as a cofactor.

It catalyses the reaction N-(5-phospho-beta-D-ribosyl)anthranilate + diphosphate = 5-phospho-alpha-D-ribose 1-diphosphate + anthranilate. It functions in the pathway amino-acid biosynthesis; L-tryptophan biosynthesis; L-tryptophan from chorismate: step 2/5. In terms of biological role, catalyzes the transfer of the phosphoribosyl group of 5-phosphorylribose-1-pyrophosphate (PRPP) to anthranilate to yield N-(5'-phosphoribosyl)-anthranilate (PRA). This Rubrobacter xylanophilus (strain DSM 9941 / JCM 11954 / NBRC 16129 / PRD-1) protein is Anthranilate phosphoribosyltransferase.